The sequence spans 529 residues: Peptide chain release factor 3 (529 aa).

Positions 11-280 (AKRRTFAIIS…GLVAWAPAPM (270 aa)) constitute a tr-type G domain. Residues 20–27 (SHPDAGKT), 88–92 (DTPGH), and 142–145 (NKLD) each bind GTP.

It belongs to the TRAFAC class translation factor GTPase superfamily. Classic translation factor GTPase family. PrfC subfamily.

The protein localises to the cytoplasm. In terms of biological role, increases the formation of ribosomal termination complexes and stimulates activities of RF-1 and RF-2. It binds guanine nucleotides and has strong preference for UGA stop codons. It may interact directly with the ribosome. The stimulation of RF-1 and RF-2 is significantly reduced by GTP and GDP, but not by GMP. In Edwardsiella ictaluri (strain 93-146), this protein is Peptide chain release factor 3.